The primary structure comprises 402 residues: Serine/threonine-protein kinase US3 homolog (402 aa).

2 disordered regions span residues Met1–Asp21 and Phe46–Thr88. The region spanning Tyr102 to Phe386 is the Protein kinase domain. ATP is bound by residues Pro110–Val118 and Lys127. Asp218 (proton acceptor) is an active-site residue.

Belongs to the protein kinase superfamily. Ser/Thr protein kinase family. In terms of processing, phosphorylated by UL13 homolog; this phosphorylation regulates subsequent phosphorylation of UL31 and UL34 homologs by US3. Autophosphorylated.

Its subcellular location is the host cytoplasm. It is found in the host nucleus. The enzyme catalyses L-seryl-[protein] + ATP = O-phospho-L-seryl-[protein] + ADP + H(+). The catalysed reaction is L-threonyl-[protein] + ATP = O-phospho-L-threonyl-[protein] + ADP + H(+). Its function is as follows. Multifunctional serine/threonine kinase that plays a role in several processes including egress of virus particles from the nucleus, modulation of the actin cytoskeleton and inhibition of apoptosis. Phosphorylates UL31 and UL34 homologs, two critical regulators of capsid budding from nucleus to endoplasmic reticulum, thereby facilitating virion egress. Modulates and redistributes host components of the nuclear envelope, including LMNA, emerin/EMD and the nuclear matrix protein MATR3. Phosphorylates envelope glycoprotein B (gB), probably to direct it to the cell surface. Promotes virus intracellular spread by restructuring host cell cytoskeleton. Blocks host apoptosis to extend cell survival and allow efficient viral replication. Promotes viral gene expression by phosphorylating host HDAC2 to reduce viral genome silencing. This Gallid herpesvirus 2 (strain GA) (GaHV-2) protein is Serine/threonine-protein kinase US3 homolog (US1206).